The primary structure comprises 547 residues: MDIFKVLSRGATIQRNGKHRKDLTLLNHAAPKDTQDNVDIEVARETDFFKTKTDTYSKKRVAEEAELDNEEEEEAPPPIISTPEEAVVFRNKHKINITGEDSPLPIGSFEDLITRFNLHPYLLANLKKNKYTDPTPIQCESIPTMLNGRDLIACAPTGSGKTMAYSIPMVEMLGKKKGSKDAKKGIKALVVAPTKELASQIFNAVFSLCVGVGKKKDELKPCLLDKSTADKLRNGKVSSQKYDICITTPLRLVSALNDGSLDLGSLDLVIFDEADKLFEKGFATQVDDILAACPSGIQKTLFSATIPASVEQLANSIMSTDPLRIIIGNKQAAAQTVEQKLVYAGNEEGKLVAIRQMAREGQLVAPVIIFLQSIDRAKALFKELVFDGINVDQIHGDMTAAKRASVIDRFRNGEVWVLICTDVLARGIDFRGINLVINYDVPQSAQSYVHRIGRTGRAGRLGKAVTFFTKEDATNVKVVVNVMKQSGQEVPDWLNNLAPLTQKERDNIKNRPIKRKKISTQHALANNKKKRAKQQMKGLKKMKKDDE.

The Q motif motif lies at 111-139 (DLITRFNLHPYLLANLKKNKYTDPTPIQC). The 183-residue stretch at 142 to 324 (IPTMLNGRDL…NSIMSTDPLR (183 aa)) folds into the Helicase ATP-binding domain. An ATP-binding site is contributed by 155-162 (APTGSGKT). The short motif at 272-275 (DEAD) is the DEAD box element. Residues 336–498 (TVEQKLVYAG…EVPDWLNNLA (163 aa)) form the Helicase C-terminal domain. The interval 511 to 547 (RPIKRKKISTQHALANNKKKRAKQQMKGLKKMKKDDE) is disordered. Basic residues predominate over residues 527-547 (NKKKRAKQQMKGLKKMKKDDE).

This sequence belongs to the DEAD box helicase family. DDX52/ROK1 subfamily. As to quaternary structure, interacts with the U3 snoRNA and is associated with the 90S and 40S pre-ribosomes.

The protein localises to the nucleus. It localises to the nucleolus. It catalyses the reaction ATP + H2O = ADP + phosphate + H(+). Functionally, ATP-dependent RNA helicase involved in 40S ribosomal subunit biogenesis. Required for the processing and cleavage of 35S pre-rRNA at sites A0, A1, and A2, leading to mature 18S rRNA. This chain is ATP-dependent RNA helicase ROK1 (ROK1), found in Yarrowia lipolytica (strain CLIB 122 / E 150) (Yeast).